A 193-amino-acid chain; its full sequence is dCTP deaminase, dUMP-forming (193 aa).

DCTP contacts are provided by residues 101–106, Asp119, 127–129, Gln148, Tyr162, and Gln174; these read KSSLGR and TLE. Glu129 (proton donor/acceptor) is an active-site residue. The tract at residues 160–193 is disordered; it reads TPYGSGSLGSKYQGQRGPTPSKGYLNFSSEQDSD. The segment covering 167 to 177 has biased composition (polar residues); the sequence is LGSKYQGQRGP.

The protein belongs to the dCTP deaminase family. In terms of assembly, homotrimer.

It carries out the reaction dCTP + 2 H2O = dUMP + NH4(+) + diphosphate. The protein operates within pyrimidine metabolism; dUMP biosynthesis; dUMP from dCTP: step 1/1. Its function is as follows. Bifunctional enzyme that catalyzes both the deamination of dCTP to dUTP and the hydrolysis of dUTP to dUMP without releasing the toxic dUTP intermediate. The chain is dCTP deaminase, dUMP-forming from Corynebacterium efficiens (strain DSM 44549 / YS-314 / AJ 12310 / JCM 11189 / NBRC 100395).